The following is a 102-amino-acid chain: Small ribosomal subunit protein uS10 (102 aa).

The protein belongs to the universal ribosomal protein uS10 family. As to quaternary structure, part of the 30S ribosomal subunit.

Functionally, involved in the binding of tRNA to the ribosomes. The polypeptide is Small ribosomal subunit protein uS10 (Oceanobacillus iheyensis (strain DSM 14371 / CIP 107618 / JCM 11309 / KCTC 3954 / HTE831)).